The primary structure comprises 882 residues: Alanine--tRNA ligase (882 aa).

The Zn(2+) site is built by H574, H578, C682, and H686. The tract at residues 853–882 (GGRGGGKGALAQGGGLDPRKAREALPGLLP) is disordered. The segment covering 854 to 868 (GRGGGKGALAQGGGL) has biased composition (gly residues).

Belongs to the class-II aminoacyl-tRNA synthetase family. Zn(2+) serves as cofactor.

The protein localises to the cytoplasm. The enzyme catalyses tRNA(Ala) + L-alanine + ATP = L-alanyl-tRNA(Ala) + AMP + diphosphate. Catalyzes the attachment of alanine to tRNA(Ala) in a two-step reaction: alanine is first activated by ATP to form Ala-AMP and then transferred to the acceptor end of tRNA(Ala). Also edits incorrectly charged Ser-tRNA(Ala) and Gly-tRNA(Ala) via its editing domain. The chain is Alanine--tRNA ligase from Thermus thermophilus (strain ATCC 27634 / DSM 579 / HB8).